Consider the following 276-residue polypeptide: Phosphate import ATP-binding protein PstB 2 (276 aa).

The region spanning 22–262 is the ABC transporter domain; the sequence is MAAVNLTLGF…PKHAETARYV (241 aa). Position 54-61 (54-61) interacts with ATP; the sequence is GPTGSGKT.

The protein belongs to the ABC transporter superfamily. Phosphate importer (TC 3.A.1.7) family. In terms of assembly, the complex is composed of two ATP-binding proteins (PstB), two transmembrane proteins (PstC and PstA) and a solute-binding protein (PstS).

The protein localises to the cell membrane. The catalysed reaction is phosphate(out) + ATP + H2O = ADP + 2 phosphate(in) + H(+). Functionally, part of the ABC transporter complex PstSACB involved in phosphate import. Responsible for energy coupling to the transport system. The sequence is that of Phosphate import ATP-binding protein PstB 2 from Mycobacterium bovis (strain ATCC BAA-935 / AF2122/97).